A 493-amino-acid polypeptide reads, in one-letter code: Transcript termination protein OPG145 (493 aa).

The 157-residue stretch at 100–256 (MIKLKRPLYI…NSIINIAKLS (157 aa)) folds into the Helicase ATP-binding domain. Residue 113 to 120 (LACGFGKT) coordinates ATP. A DESH box motif is present at residues 206-209 (DESH).

Belongs to the helicase family. Poxviruses subfamily. Interacts with OPG087. Might be part of a transcription complex composed at least of OPG087, OPG110, and OPG145.

The protein resides in the virion. DNA helicase which seems to act as a postreplicative transcription termination factor. Involved in ATP-dependent release of nascent RNA. Forms a stable complex with single-stranded DNA, and to a lesser extent RNA. The protein is Transcript termination protein OPG145 (OPG145) of Variola virus (isolate Human/India/Ind3/1967) (VARV).